A 211-amino-acid chain; its full sequence is MGQKVNPVGFRLWTHGSHGSVWYSKSCDYAKTVAEDYFVTKYVESSFAHIGISKVIIKRKGASCDITLHCMKPGLIIGKKGADLESFRLKLNKKFGFVPSLNVVEVKKPNSSAVLVAKSIAFQLEKRSSFRRVIKKAIATVMRESDVKGVKVACSGRLSGAEIARTEVFKEGSIPLHTMRADIDYWVAEAHTTYGVIGVKVWIYRGNIFRV.

A KH type-2 domain is found at 39–107 (VTKYVESSFA…VPSLNVVEVK (69 aa)).

Belongs to the universal ribosomal protein uS3 family. As to quaternary structure, part of the 30S ribosomal subunit. Forms a tight complex with proteins S10 and S14.

Functionally, binds the lower part of the 30S subunit head. Binds mRNA in the 70S ribosome, positioning it for translation. The chain is Small ribosomal subunit protein uS3 from Neorickettsia sennetsu (strain ATCC VR-367 / Miyayama) (Ehrlichia sennetsu).